Reading from the N-terminus, the 662-residue chain is Putative cysteine-rich receptor-like protein kinase 16 (662 aa).

Residues 1-26 (MIFIMKLKNLLPIFCFFLVSFSISSA) form the signal peptide. Gnk2-homologous domains lie at 27–131 (QKCG…NRSF) and 137–244 (MTPF…LYQF). Topologically, residues 27-277 (QKCGKTGLFK…DDGGKISTRN (251 aa)) are extracellular. N-linked (GlcNAc...) asparagine glycosylation is found at asparagine 55, asparagine 64, asparagine 106, asparagine 128, asparagine 145, asparagine 152, and asparagine 206. The helical transmembrane segment at 278 to 298 (ILGITVALAFFITVLLVLGYA) threads the bilayer. Residues 299-662 (LSRRRKAYQE…DASITSVDLR (364 aa)) are Cytoplasmic-facing. Positions 335 to 612 (FQKSNKLGHG…VFQMLTNTFL (278 aa)) constitute a Protein kinase domain. Residues 341–349 (LGHGGFGEV) and lysine 363 each bind ATP. Aspartate 460 serves as the catalytic Proton acceptor.

This sequence belongs to the protein kinase superfamily. Ser/Thr protein kinase family. CRK subfamily.

The protein resides in the membrane. It catalyses the reaction L-seryl-[protein] + ATP = O-phospho-L-seryl-[protein] + ADP + H(+). The catalysed reaction is L-threonyl-[protein] + ATP = O-phospho-L-threonyl-[protein] + ADP + H(+). This is Putative cysteine-rich receptor-like protein kinase 16 (CRK16) from Arabidopsis thaliana (Mouse-ear cress).